We begin with the raw amino-acid sequence, 89 residues long: Putative septation protein SpoVG (89 aa).

Belongs to the SpoVG family.

Could be involved in septation. The sequence is that of Putative septation protein SpoVG from Heliobacterium modesticaldum (strain ATCC 51547 / Ice1).